The chain runs to 346 residues: Histone PARylation factor 1 (346 aa).

M1 bears the N-acetylmethionine mark. An N6-acetyllysine mark is found at K19, K186, and K233. D235 is modified (polyADP-ribosyl aspartic acid). Y238 is modified (ADP-ribosyltyrosine). At E240 the chain carries PolyADP-ribosyl glutamic acid. The segment at 242 to 346 (PETDADLKRI…SEENIDQLAG (105 aa)) is interaction with PARP1. The active-site Proton donor is the E284.

The protein belongs to the HPF1 family. In terms of assembly, interacts with PARP1 (via the PARP catalytic domain). Interacts with PARP2 (via the PARP catalytic domain). Interacts with core nucleosomes in a PARP1- and PARP2-dependent manner.

It localises to the chromosome. It is found in the nucleus. In terms of biological role, cofactor for serine ADP-ribosylation that confers serine specificity on PARP1 and PARP2 and plays a key role in DNA damage response. Initiates the repair of double-strand DNA breaks: recruited to DNA damage sites by PARP1 and PARP2 and switches the amino acid specificity of PARP1 and PARP2 from aspartate or glutamate to serine residues, licensing serine ADP-ribosylation of target proteins. Serine ADP-ribosylation of target proteins, such as histones, promotes decompaction of chromatin and the recruitment of repair factors leading to the reparation of DNA strand breaks. Serine ADP-ribosylation of proteins constitutes the primary form of ADP-ribosylation of proteins in response to DNA damage. HPF1 acts by completing the active site of PARP1 and PARP2: forms a composite active site composed of residues from HPF1 and PARP1 or PARP2. While HPF1 promotes the initiation of serine ADP-ribosylation, it restricts the polymerase activity of PARP1 and PARP2 in order to limit the length of poly-ADP-ribose chains. HPF1 also promotes tyrosine ADP-ribosylation, probably by conferring tyrosine specificity on PARP1. This is Histone PARylation factor 1 from Mus musculus (Mouse).